The primary structure comprises 535 residues: Arylsulfatase K (535 aa).

The first 22 residues, 1–22, serve as a signal peptide directing secretion; that stretch reads MLLLWLSVFAASALAAPDRGAG. Residues aspartate 44 and cysteine 84 each coordinate Ca(2+). Residue cysteine 84 is the Nucleophile of the active site. 3-oxoalanine (Cys) is present on cysteine 84. N-linked (GlcNAc...) asparagine glycosylation is present at asparagine 112. Lysine 132 is a binding site for substrate. The N-linked (GlcNAc...) asparagine glycan is linked to asparagine 197. Histidine 255 contacts substrate. An N-linked (GlcNAc...) asparagine glycan is attached at asparagine 266. Ca(2+)-binding residues include aspartate 317 and histidine 318. Asparagine 379, asparagine 417, and asparagine 502 each carry an N-linked (GlcNAc...) asparagine glycan.

It belongs to the sulfatase family. Ca(2+) serves as cofactor. The conversion to 3-oxoalanine (also known as C-formylglycine, FGly), of a serine or cysteine residue in prokaryotes and of a cysteine residue in eukaryotes, is critical for catalytic activity. Post-translationally, the 75-kDa precursor undergoes proteolytic processing to yield a 23 kDa form. In terms of processing, N-glycosylated with both high mannose and complex type sugars.

It localises to the secreted. The protein resides in the lysosome. The catalysed reaction is an aryl sulfate + H2O = a phenol + sulfate + H(+). The enzyme catalyses Hydrolysis of the 2-sulfate groups of the 2-O-sulfo-D-glucuronate residues of chondroitin sulfate, heparin and heparitin sulfate.. Catalyzes the hydrolysis of pseudosubstrates such as p-nitrocatechol sulfate and p-nitrophenyl sulfate. Catalyzes the hydrolysis of the 2-sulfate groups of the 2-O-sulfo-D-glucuronate residues of chondroitin sulfate, heparin and heparitin sulfate. Acts selectively on 2-sulfoglucuronate and lacks activity against 2-sulfoiduronate. This is Arylsulfatase K (ARSK) from Canis lupus familiaris (Dog).